The primary structure comprises 1370 residues: DNA-directed RNA polymerase subunit beta (1370 aa).

Belongs to the RNA polymerase beta chain family. The RNAP catalytic core consists of 2 alpha, 1 beta, 1 beta' and 1 omega subunit. When a sigma factor is associated with the core the holoenzyme is formed, which can initiate transcription.

It catalyses the reaction RNA(n) + a ribonucleoside 5'-triphosphate = RNA(n+1) + diphosphate. In terms of biological role, DNA-dependent RNA polymerase catalyzes the transcription of DNA into RNA using the four ribonucleoside triphosphates as substrates. This Verminephrobacter eiseniae (strain EF01-2) protein is DNA-directed RNA polymerase subunit beta.